Consider the following 2559-residue polypeptide: Nonribosomal peptide synthetase asqK (2559 aa).

Residues 90–474 (YRPSHTAIHA…SRKDSQVKIR (385 aa)) form an adenylation 1 region. The region spanning 593–669 (TNIEQLVHEL…SLVHYPAGLE (77 aa)) is the Carrier 1 domain. Position 627 is an O-(pantetheine 4'-phosphoryl)serine (Ser627). The condensation 1 stretch occupies residues 695–989 (TVEQSFSQAR…GNVQCIRTKV (295 aa)). The tract at residues 1155-1562 (FDEQVRAQTD…GRMDQQVKVR (408 aa)) is adenylation 2. The tract at residues 1681 to 1776 (LEIGTGSGMI…NTIKDLVRQG (96 aa)) is methyltransferase. A Carrier 2 domain is found at 2090–2164 (AFTSEIERAV…GLAQHLQGLG (75 aa)). Position 2124 is an O-(pantetheine 4'-phosphoryl)serine (Ser2124). The condensation 2 stretch occupies residues 2261–2409 (FDGVSLSAIL…VNRCLLRVKV (149 aa)).

Belongs to the NRP synthetase family.

The enzyme catalyses O-methyl-L-tyrosine + anthranilate + S-adenosyl-L-methionine + 2 ATP = (-)-4'-methoxycyclopeptine + 2 AMP + S-adenosyl-L-homocysteine + 2 diphosphate + 2 H(+). The catalysed reaction is anthranilate + L-phenylalanine + S-adenosyl-L-methionine + 2 ATP = cyclopeptine + 2 AMP + S-adenosyl-L-homocysteine + 2 diphosphate + 2 H(+). It functions in the pathway secondary metabolite biosynthesis. Its pathway is alkaloid biosynthesis. It participates in mycotoxin biosynthesis. Its function is as follows. Nonribosomal peptide synthetase; part of the gene cluster that mediates the biosynthesis of the aspoquinolone mycotoxins. The first stage is catalyzed by the nonribosomal peptide synthetase asqK that condenses anthranilic acid and O-methyl-L-tyrosine to produce 4'-methoxycyclopeptin. AsqK is also able to use anthranilic acid and L-phenylalanine as substrates to produce cyclopeptin, but at a tenfold lower rate. Within the pathway, 4'-methoxycyclopeptin is then converted to 4'-methoxydehydrocyclopeptin by the ketoglutarate-dependent dioxygenase asqJ. AsqJ also converts its first product 4'-methoxydehydrocyclopeptin to 4'-methoxycyclopenin. The following conversion of 4'-methoxycyclopenin into 4'-methoxyviridicatin is catalyzed by the cyclopenase asqI. 4'-methoxyviridicatin is the precursor of quinolone natural products, and is further converted to quinolinone B. The prenyltransferase asqH1 then catalyzes the canonical Friedel-Crafts alkylation of quinolinone B with dimethylallyl cation to yield dimethylallyl quinolone, which is subjected to FAD-dependent dehydrogenation by the FAD-linked oxidoreductase asqF to yield conjugated aryl diene. The delta(3') double bond then serves as the site of the second alkylation with DMAPP catalyzed by the prenyltransferase asqH2 to yield a carbenium ion intermediate, which can be attacked by H(2)O to yield a styrenyl quinolone containing a C3'-hydroxyprenyl chain. The FAD-dependent monooxygenase asqG performs epoxidation of the terminal C7'-C8' olefin. Finally, after dehydratation of the epoxide at C3 by asqC, the quinolone epoxide rearrangement protein asqO catalyzes an enzymatic 3-exo-tet cyclization to yield the cyclopropyl-THF ring system in aspoquinolone. This is Nonribosomal peptide synthetase asqK from Emericella nidulans (strain FGSC A4 / ATCC 38163 / CBS 112.46 / NRRL 194 / M139) (Aspergillus nidulans).